A 1241-amino-acid polypeptide reads, in one-letter code: ATP-dependent helicase/nuclease subunit A (1241 aa).

One can recognise a UvrD-like helicase ATP-binding domain in the interval 12-485 (SQWTDDQWKA…IDLAKNFRSR (474 aa)). 33-40 (AAAGSGKT) contacts ATP. A UvrD-like helicase C-terminal domain is found at 505–805 (GEIDYDADAE…RIMTIHKSKG (301 aa)).

The protein belongs to the helicase family. AddA subfamily. Heterodimer of AddA and AddB/RexB. Mg(2+) serves as cofactor.

It carries out the reaction Couples ATP hydrolysis with the unwinding of duplex DNA by translocating in the 3'-5' direction.. The enzyme catalyses ATP + H2O = ADP + phosphate + H(+). In terms of biological role, the heterodimer acts as both an ATP-dependent DNA helicase and an ATP-dependent, dual-direction single-stranded exonuclease. Recognizes the chi site generating a DNA molecule suitable for the initiation of homologous recombination. The AddA nuclease domain is required for chi fragment generation; this subunit has the helicase and 3' -&gt; 5' nuclease activities. The polypeptide is ATP-dependent helicase/nuclease subunit A (Bacillus cereus (strain AH187)).